The primary structure comprises 308 residues: uncharacterized protein (308 aa).

Positions 15–81 (MRVDTGLARL…QNTPIDIEGM (67 aa)) constitute an S4 RNA-binding domain. Asp139 is a catalytic residue.

It belongs to the pseudouridine synthase RluA family.

It catalyses the reaction a uridine in RNA = a pseudouridine in RNA. This is an uncharacterized protein from Mycobacterium tuberculosis (strain CDC 1551 / Oshkosh).